The primary structure comprises 307 residues: Putative flagellar export/assembly protein LafU (307 aa).

The helical transmembrane segment at 32 to 54 threads the bilayer; sequence AWKVAFADFTLAMMALFMTLWIV. Positions 87-108 are disordered; the sequence is SPSHPPKPATVAAPEETEKKAR. One can recognise an OmpA-like domain in the interval 154 to 272; that stretch reads LRVLIKDDQN…RIEIMVLTKS (119 aa).

It belongs to the MotB family.

The protein resides in the cell inner membrane. Part of the flagellar gene cluster Flag-2. However, the Flag-2 flagellar system could be inactive in strain 042 due to a frameshift in lfgC. The polypeptide is Putative flagellar export/assembly protein LafU (Escherichia coli O44:H18 (strain 042 / EAEC)).